The sequence spans 183 residues: Transmembrane protein 252 (183 aa).

2 helical membrane passes run 8–28 (ILCA…GFFI) and 39–59 (LVVA…GIFW).

The protein resides in the membrane. The sequence is that of Transmembrane protein 252 (Tmem252) from Mus musculus (Mouse).